A 509-amino-acid polypeptide reads, in one-letter code: Cytochrome P450 monooxygenase CYP512U6 (509 aa).

A helical transmembrane segment spans residues 12-29 (VFACVAVVIAIYAVRWYT). A heme-binding site is contributed by Cys446.

The protein belongs to the cytochrome P450 family. Heme serves as cofactor.

It localises to the membrane. It carries out the reaction ganoderate DM + reduced [NADPH--hemoprotein reductase] + O2 = hainanate A + oxidized [NADPH--hemoprotein reductase] + H2O + H(+). The catalysed reaction is ganoderate TR + reduced [NADPH--hemoprotein reductase] + O2 = ganoderate Jc + oxidized [NADPH--hemoprotein reductase] + H2O + H(+). It participates in secondary metabolite biosynthesis; terpenoid biosynthesis. Functionally, cytochrome P450 monooxygenase that hydroxylates the ganoderic acids DM and TR at the C-23 position to produce hainanic acid A and ganoderic acid Jc, respectively. In Ganoderma lucidum (Ling zhi medicinal fungus), this protein is Cytochrome P450 monooxygenase CYP512U6.